The sequence spans 338 residues: Tetraacyldisaccharide 4'-kinase (338 aa).

Residue 66–73 coordinates ATP; the sequence is IAGGAGKT.

The protein belongs to the LpxK family.

The catalysed reaction is a lipid A disaccharide + ATP = a lipid IVA + ADP + H(+). It participates in glycolipid biosynthesis; lipid IV(A) biosynthesis; lipid IV(A) from (3R)-3-hydroxytetradecanoyl-[acyl-carrier-protein] and UDP-N-acetyl-alpha-D-glucosamine: step 6/6. Its function is as follows. Transfers the gamma-phosphate of ATP to the 4'-position of a tetraacyldisaccharide 1-phosphate intermediate (termed DS-1-P) to form tetraacyldisaccharide 1,4'-bis-phosphate (lipid IVA). This is Tetraacyldisaccharide 4'-kinase from Delftia acidovorans (strain DSM 14801 / SPH-1).